The sequence spans 552 residues: Cytochrome c oxidase subunit 1 (552 aa).

A helical transmembrane segment spans residues Val35–Ala55. A Fe(II)-heme a-binding site is contributed by His82. The next 6 helical transmembrane spans lie at Ile85–Pro105, Ala120–Gly140, Trp164–Val184, Leu211–Ile231, Leu252–Met272, and Ile284–Val304. The Cu cation site is built by His258 and Tyr262. Residues His258–Tyr262 constitute a cross-link (1'-histidyl-3'-tyrosine (His-Tyr)). His307 and His308 together coordinate Cu cation. 5 consecutive transmembrane segments (helical) span residues Phe321–Val341, Met355–Leu375, Val390–Ile410, Leu426–His446, and Ile470–Ile490. Residue His393 participates in heme a3 binding. His395 serves as a coordination point for Fe(II)-heme a.

It belongs to the heme-copper respiratory oxidase family. The cofactor is Cu(2+). Heme serves as cofactor.

It is found in the cell membrane. The enzyme catalyses 4 Fe(II)-[cytochrome c] + O2 + 8 H(+)(in) = 4 Fe(III)-[cytochrome c] + 2 H2O + 4 H(+)(out). Its pathway is energy metabolism; oxidative phosphorylation. In terms of biological role, cytochrome c oxidase is the component of the respiratory chain that catalyzes the reduction of oxygen to water. Subunits 1-3 form the functional core of the enzyme complex. CO I is the catalytic subunit of the enzyme. Electrons originating in cytochrome c are transferred via the copper A center of subunit 2 and heme A of subunit 1 to the bimetallic center formed by heme A3 and copper B. The sequence is that of Cytochrome c oxidase subunit 1 (ctaD) from Thermostichus vulcanus (Synechococcus vulcanus).